Reading from the N-terminus, the 195-residue chain is Calcineurin B homologous protein 1 (195 aa).

A lipid anchor (N-myristoyl glycine) is attached at G2. EF-hand domains follow at residues 26–61, 66–101, 110–145, and 151–186; these read SQIT…AINP, IINA…KSKD, SRSN…MVGV, and QLGS…VDVE. Positions 123, 125, 127, 129, 134, 164, 166, 168, and 175 each coordinate Ca(2+).

This sequence belongs to the calcineurin regulatory subunit family. CHP subfamily. In terms of assembly, monomer. In terms of processing, phosphorylated. Post-translationally, calcium-binding or N-myristoylation are necessary for the Na(+)/H(+) exchange activities.

The protein resides in the nucleus. It is found in the cytoplasm. The protein localises to the cytoskeleton. It localises to the endomembrane system. Its subcellular location is the endoplasmic reticulum-Golgi intermediate compartment. The protein resides in the endoplasmic reticulum. It is found in the cell membrane. The protein localises to the membrane. Calcium-binding protein involved in different processes such as regulation of vesicular trafficking, plasma membrane Na(+)/H(+) exchanger and gene transcription. Involved in the constitutive exocytic membrane traffic. Mediates the association between microtubules and membrane-bound organelles of the endoplasmic reticulum and Golgi apparatus and is also required for the targeting and fusion of transcytotic vesicles (TCV) with the plasma membrane. Functions as an integral cofactor in cell pH regulation by controlling plasma membrane-type Na(+)/H(+) exchange activity. Inhibits serum- and GTPase-stimulated Na(+)/H(+) exchange. Plays a role as an inhibitor of ribosomal RNA transcription. Acts as a negative regulator of the calcineurin/NFAT signaling pathway. The chain is Calcineurin B homologous protein 1 (CHP1) from Gallus gallus (Chicken).